The chain runs to 131 residues: uncharacterized protein (131 aa).

This is an uncharacterized protein from Mycobacterium tuberculosis (strain CDC 1551 / Oshkosh).